The chain runs to 85 residues: Small ribosomal subunit protein uS17 (85 aa).

This sequence belongs to the universal ribosomal protein uS17 family. In terms of assembly, part of the 30S ribosomal subunit.

Functionally, one of the primary rRNA binding proteins, it binds specifically to the 5'-end of 16S ribosomal RNA. The sequence is that of Small ribosomal subunit protein uS17 from Mycoplasmoides gallisepticum (strain R(low / passage 15 / clone 2)) (Mycoplasma gallisepticum).